Consider the following 446-residue polypeptide: Histone acetyltransferase type B subunit 2 (446 aa).

WD repeat units lie at residues 138-178 (DHPG…ITPS), 189-229 (GHKE…GTSK), 231-270 (LKYSRKYTHHSHIVNDVQHHPLVKSWIGTVSDDLTLQIID), 286-326 (GHSD…SKVH), and 330-370 (GHQD…DEQT). The interaction with the histone H4 N-terminus stretch occupies residues 372 to 376 (DDAED). Residues 387–427 (GHTNHLADFSWNRNDPWLVCSAAEDNLLQIWKVANSIVSKE) form a WD 6 repeat. Residues 427-446 (EPADMSTPELDDPKPKQSSH) are disordered. Residues 437–446 (DDPKPKQSSH) show a composition bias toward basic and acidic residues.

It belongs to the WD repeat RBAP46/RBAP48/MSI1 family. In terms of assembly, component of the HAT-B complex composed of at least hat-1 and hat-2. The HAT-B complex binds to histone H4 tail.

The protein localises to the cytoplasm. Its subcellular location is the nucleus. In terms of biological role, regulatory subunit of the histone acetylase B (HAT-B) complex. The complex acetylates 'Lys-12' of histone H4 which is required for telomeric silencing. This chain is Histone acetyltransferase type B subunit 2 (hat-2), found in Neurospora crassa (strain ATCC 24698 / 74-OR23-1A / CBS 708.71 / DSM 1257 / FGSC 987).